The sequence spans 81 residues: RNA-binding protein Hfq (81 aa).

Residues 10–70 (DLFLNSVRKS…ISTIMPSQPV (61 aa)) form the Sm domain.

It belongs to the Hfq family. Homohexamer.

Its function is as follows. RNA chaperone that binds small regulatory RNA (sRNAs) and mRNAs to facilitate mRNA translational regulation in response to envelope stress, environmental stress and changes in metabolite concentrations. Also binds with high specificity to tRNAs. The polypeptide is RNA-binding protein Hfq (Mesorhizobium japonicum (strain LMG 29417 / CECT 9101 / MAFF 303099) (Mesorhizobium loti (strain MAFF 303099))).